The following is a 138-amino-acid chain: Cytosolic calcium-binding protein 2 (138 aa).

The span at 31–41 (TEVTQQPEESV) shows a compositional bias: low complexity. The segment at 31–122 (TEVTQQPEES…KKTEVVEEKQ (92 aa)) is disordered. 6 consecutive repeat copies span residues 62–68 (VEEAEKK), 71–75 (ETEKK), 92–98 (VEEEEKK), 109–114 (VEEEKK), 118–122 (VEEKQ), and 131–135 (VAVEK). The 6 X 5 AA approximate repeats of V-E-E-K-K stretch occupies residues 62–135 (VEEAEKKDEE…AAAEEVAVEK (74 aa)). Basic and acidic residues predominate over residues 64–85 (EAEKKDEETEKKTEEKDEKTEV). Over residues 110–122 (EEEKKTEVVEEKQ) the composition is skewed to basic and acidic residues.

In terms of tissue distribution, predominantly expressed in roots (e.g. in endodermis in the stele) and stems, to a lower extent in shoots, flowers and siliques, and, at low levels, in leaves.

Its subcellular location is the cytoplasm. It localises to the cytosol. Binds calcium Ca(2+) and may act as a signal mediator to buffer Ca(2+). The sequence is that of Cytosolic calcium-binding protein 2 from Arabidopsis thaliana (Mouse-ear cress).